Reading from the N-terminus, the 131-residue chain is MKIALIAHDKKKDDMVSFAYAYKPIFEKHELFATGTTGLRIMEATGLVVTRYQSGPLGGDQEIGAMIAKNEMDMVIFFRDPLTAQPHEPDVNALLRLCDVYAIPLATNMASAEMLMHALERGDLDYRKLRK.

The MGS-like domain occupies 1–131; that stretch reads MKIALIAHDK…GDLDYRKLRK (131 aa). Residues H8, K12, 34-37, and 54-55 contribute to the substrate site; these read TGTT and SG. The Proton donor/acceptor role is filled by D60. H87 lines the substrate pocket.

Belongs to the methylglyoxal synthase family.

The catalysed reaction is dihydroxyacetone phosphate = methylglyoxal + phosphate. Functionally, catalyzes the formation of methylglyoxal from dihydroxyacetone phosphate. The protein is Methylglyoxal synthase of Bacillus mycoides (strain KBAB4) (Bacillus weihenstephanensis).